A 288-amino-acid chain; its full sequence is Acetyl-coenzyme A carboxylase carboxyl transferase subunit beta (288 aa).

In terms of domain architecture, CoA carboxyltransferase N-terminal spans 34–288 (LFAKCPACKH…HLVAFHGGVS (255 aa)). Residues Cys-38, Cys-41, Cys-56, and Cys-59 each contribute to the Zn(2+) site. The segment at 38–59 (CPACKHMIYQKDLGPAKICPTC) adopts a C4-type zinc-finger fold.

It belongs to the AccD/PCCB family. As to quaternary structure, acetyl-CoA carboxylase is a heterohexamer composed of biotin carboxyl carrier protein (AccB), biotin carboxylase (AccC) and two subunits each of ACCase subunit alpha (AccA) and ACCase subunit beta (AccD). The cofactor is Zn(2+).

The protein localises to the cytoplasm. The enzyme catalyses N(6)-carboxybiotinyl-L-lysyl-[protein] + acetyl-CoA = N(6)-biotinyl-L-lysyl-[protein] + malonyl-CoA. The protein operates within lipid metabolism; malonyl-CoA biosynthesis; malonyl-CoA from acetyl-CoA: step 1/1. Functionally, component of the acetyl coenzyme A carboxylase (ACC) complex. Biotin carboxylase (BC) catalyzes the carboxylation of biotin on its carrier protein (BCCP) and then the CO(2) group is transferred by the transcarboxylase to acetyl-CoA to form malonyl-CoA. The chain is Acetyl-coenzyme A carboxylase carboxyl transferase subunit beta from Streptococcus equi subsp. zooepidemicus (strain H70).